Here is a 418-residue protein sequence, read N- to C-terminus: Histidinol dehydrogenase (418 aa).

The NAD(+) site is built by Y119, Q180, and N203. Residues T226, Q248, and H251 each contribute to the substrate site. Zn(2+)-binding residues include Q248 and H251. Catalysis depends on proton acceptor residues E316 and H317. Substrate is bound by residues H317, D350, E404, and H409. D350 is a Zn(2+) binding site. Residue H409 participates in Zn(2+) binding.

This sequence belongs to the histidinol dehydrogenase family. The cofactor is Zn(2+).

It carries out the reaction L-histidinol + 2 NAD(+) + H2O = L-histidine + 2 NADH + 3 H(+). The protein operates within amino-acid biosynthesis; L-histidine biosynthesis; L-histidine from 5-phospho-alpha-D-ribose 1-diphosphate: step 9/9. In terms of biological role, catalyzes the sequential NAD-dependent oxidations of L-histidinol to L-histidinaldehyde and then to L-histidine. The chain is Histidinol dehydrogenase from Staphylococcus aureus (strain COL).